The chain runs to 202 residues: Flagellar transcriptional regulator FlhC (202 aa).

Positions 137, 140, 157, and 160 each coordinate Zn(2+).

This sequence belongs to the FlhC family. As to quaternary structure, heterohexamer composed of two FlhC and four FlhD subunits. Each FlhC binds a FlhD dimer, forming a heterotrimer, and a hexamer assembles by dimerization of two heterotrimers. Zn(2+) serves as cofactor.

It is found in the cytoplasm. Functions in complex with FlhD as a master transcriptional regulator that regulates transcription of several flagellar and non-flagellar operons by binding to their promoter region. Activates expression of class 2 flagellar genes, including fliA, which is a flagellum-specific sigma factor that turns on the class 3 genes. Also regulates genes whose products function in a variety of physiological pathways. In Variovorax paradoxus (strain S110), this protein is Flagellar transcriptional regulator FlhC.